A 72-amino-acid polypeptide reads, in one-letter code: 3-deoxy-manno-octulosonate cytidylyltransferase (72 aa).

The protein belongs to the KdsB family. As to quaternary structure, homodimer.

The protein resides in the cytoplasm. The enzyme catalyses 3-deoxy-alpha-D-manno-oct-2-ulosonate + CTP = CMP-3-deoxy-beta-D-manno-octulosonate + diphosphate. It participates in nucleotide-sugar biosynthesis; CMP-3-deoxy-D-manno-octulosonate biosynthesis; CMP-3-deoxy-D-manno-octulosonate from 3-deoxy-D-manno-octulosonate and CTP: step 1/1. It functions in the pathway bacterial outer membrane biogenesis; lipopolysaccharide biosynthesis. Activates KDO (a required 8-carbon sugar) for incorporation into bacterial lipopolysaccharide in Gram-negative bacteria. In Escherichia coli, this protein is 3-deoxy-manno-octulosonate cytidylyltransferase (kpsU).